Reading from the N-terminus, the 888-residue chain is MACLHETRTPSPSFGGFVSTLSEASMRKLDPDTSDCTPEKDLTPTQCVLRDVVPLGGQGGGGPSPSPGGEPPPEPFANSVLQLHEQDTGGPGGATGSPESRASRVRADEVRLQCQSGSGFLEGLFGCLRPVWTMIGKAYSTEHKQQQEDLWEVPFEEILDLQWVGSGAQGAVFLGRFHGEEVAVKKVRDLKETDIKHLRKLKHPNIITFKGVCTQAPCYCILMEFCAQGQLYEVLRAGRPVTPSLLVDWSMGIAGGMNYLHLHKIIHRDLKSPNMLITYDDVVKISDFGTSKELSDKSTKMSFAGTVAWMAPEVIRNEPVSEKVDIWSFGVVLWELLTGEIPYKDVDSSAIIWGVGSNSLHLPVPSSCPDGFKILLRQCWNRKPRNRPSFRQILLHLDIASADVLSTPQETYFKSQAEWREEVKLHFEKIKSEGTCLHRLEEELVMRRREELRHALDIREHYERKLERANNLYMELNALMLQLELKERELLRREQALERRCPGLLKSHTSRSLLHGNTMEKLIKKRNVPQKLSPHSKRPDILKTESLLPKLDAALSGVGLPGCPKAPPSPGRSRRGKTRHRKASAKGSCGDLPGLRAALPPHEPGGLGSPGGLGVGPTAWDASPPALRGLHHDLLLRKMSSSSPDLLSAALGARGRGATGGARDPGSPPPPQGDTPPSEGSAPGSTSPDSPGGAKGEPPPPVGPGEGVGLLGTGREGTTGRGGSRAGYQHLTPAALLYRAAVTRSQKRGISSEEEEGEVDSEVELPPSQRWPQGPNMRQSLSTFSSENPSDVEEGTASEPSPSGTPEVGSTNTDERPDERSDDMCSQGSEIPLDLPTSEVVPERETSSLPMQHQDDQGPNPEDSDCDSTELDNSNSIDALPPPASLPP.

The span at 26 to 42 (MRKLDPDTSDCTPEKDL) shows a compositional bias: basic and acidic residues. Residues 26–104 (MRKLDPDTSD…TGSPESRASR (79 aa)) are disordered. A phosphothreonine mark is found at Thr-37 and Thr-43. Residues 64–75 (SPSPGGEPPPEP) are compositionally biased toward pro residues. The region spanning 158–399 (ILDLQWVGSG…FRQILLHLDI (242 aa)) is the Protein kinase domain. ATP is bound by residues 164–172 (VGSGAQGAV) and Lys-185. Asp-269 acts as the Proton acceptor in catalysis. Leucine-zipper stretches follow at residues 423–444 (VKLHFEKIKSEGTCLHRLEEEL) and 476–497 (LNALMLQLELKERELLRREQAL). The interval 557 to 620 (GVGLPGCPKA…GGLGVGPTAW (64 aa)) is disordered. Residues 572-584 (RSRRGKTRHRKAS) are compositionally biased toward basic residues. Residues 605–615 (GGLGSPGGLGV) are compositionally biased toward gly residues. Ser-640 carries the post-translational modification Phosphoserine. 2 disordered regions span residues 654 to 731 (RGRG…YQHL) and 743 to 888 (TRSQ…SLPP). A compositionally biased stretch (gly residues) spans 704 to 725 (PGEGVGLLGTGREGTTGRGGSR). The segment covering 752 to 763 (SEEEEGEVDSEV) has biased composition (acidic residues). Composition is skewed to polar residues over residues 776–789 (NMRQSLSTFSSENP) and 798–812 (SEPSPSGTPEVGSTN). Residues 813-823 (TDERPDERSDD) are compositionally biased toward basic and acidic residues.

This sequence belongs to the protein kinase superfamily. STE Ser/Thr protein kinase family. MAP kinase kinase kinase subfamily. As to quaternary structure, homodimer. Interacts with MBIP. Requires Mg(2+) as cofactor. In terms of processing, autophosphorylated on Ser/Thr. Phosphorylated in cytosol under basal conditions and dephosphorylated when membrane-associated. The activity of MAP3K12 can be regulated through its proteasomal degradation. APOE, through a receptor-mediated mechanism, activates MAP3K12 by preventing its proteasomal degradation.

Its subcellular location is the cytoplasm. It localises to the cell membrane. The enzyme catalyses L-seryl-[protein] + ATP = O-phospho-L-seryl-[protein] + ADP + H(+). The catalysed reaction is L-threonyl-[protein] + ATP = O-phospho-L-threonyl-[protein] + ADP + H(+). In terms of biological role, part of a non-canonical MAPK signaling pathway. Activated by APOE, enhances the AP-1-mediated transcription of APP, via a MAP kinase signal transduction pathway composed of MAP2K7 and MAPK1/ERK2 and MAPK3/ERK1. May be an activator of the JNK/SAPK pathway. The chain is Mitogen-activated protein kinase kinase kinase 12 (Map3k12) from Rattus norvegicus (Rat).